Consider the following 483-residue polypeptide: Alginate biosynthesis protein AlgA (483 aa).

This sequence belongs to the mannose-6-phosphate isomerase type 2 family. As to quaternary structure, monomer. Co(2+) serves as cofactor.

The enzyme catalyses D-mannose 6-phosphate = D-fructose 6-phosphate. It catalyses the reaction alpha-D-mannose 1-phosphate + GTP + H(+) = GDP-alpha-D-mannose + diphosphate. Its pathway is nucleotide-sugar biosynthesis; GDP-alpha-D-mannose biosynthesis; GDP-alpha-D-mannose from alpha-D-mannose 1-phosphate (GTP route): step 1/1. The protein operates within nucleotide-sugar biosynthesis; GDP-alpha-D-mannose biosynthesis; alpha-D-mannose 1-phosphate from D-fructose 6-phosphate: step 1/2. Produces a precursor for alginate polymerization. The alginate layer provides a protective barrier against host immune defenses and antibiotics. This is Alginate biosynthesis protein AlgA (algA) from Pseudomonas fluorescens.